A 320-amino-acid chain; its full sequence is Malate dehydrogenase (320 aa).

NAD(+) contacts are provided by residues 10 to 15 (GAGQIG) and Asp-34. Positions 83 and 89 each coordinate substrate. NAD(+)-binding positions include Asn-96 and 119–121 (ITN). 2 residues coordinate substrate: Asn-121 and Arg-152. The active-site Proton acceptor is the His-176.

It belongs to the LDH/MDH superfamily. MDH type 3 family.

The enzyme catalyses (S)-malate + NAD(+) = oxaloacetate + NADH + H(+). Its function is as follows. Catalyzes the reversible oxidation of malate to oxaloacetate. The sequence is that of Malate dehydrogenase from Methylorubrum populi (strain ATCC BAA-705 / NCIMB 13946 / BJ001) (Methylobacterium populi).